The following is a 173-amino-acid chain: Terpene cyclase subB (173 aa).

Helical transmembrane passes span 11–31 (PGYLEVAWIADTCKLLMGLGW), 51–71 (ALMPLCCNFAWELTYAVIYPF), 112–132 (LPFIFIICIAAWTTAHLALAL), and 141–161 (AFSAYGCQLLLSVGALCQLLS).

The protein belongs to the paxB family.

Its subcellular location is the membrane. The protein operates within secondary metabolite biosynthesis; terpenoid biosynthesis. In terms of biological role, terpene cyclase; part of the gene cluster that mediates the biosynthesis of the immunosuppressants subglutinols, meroterpenoids consisting of an alpha-pyrone (4-hydroxy-5,6-dimethyl-2-pyrone) moiety attached to a decalin core fused to a five-membered cyclic ether carrying a prenylside chain. The first step of the pathway is the synthesis of the alpha-pyrone moiety by the polyketide synthase subA via condensation of one acetyl-CoA starter unit with 3 malonyl-CoA units and 2 methylations. The alpha-pyrone is then combined with geranylgeranyl pyrophosphate (GGPP) formed by the GGPP synthase subD through the action of the prenyltransferase subC to yield a linear alpha-pyrone diterpenoid. Subsequent steps in the subglutinol biosynthetic pathway involve the decalin core formation, which is thought to be initiated by the epoxidation of the C10-C11 olefin by the FAD-dependent oxidoreductase subE. The following cyclization cascade would be catalyzed by the terpene cyclase subB. Lastly, the FAD-dependent dehydrogenase subF probably catalyzes the five-membered cyclic ether formation to complete the formation of subglutinol A. Subsequent redox reactions appear to give rise to subglutinol C and D, however, it remains unclear which enzymes are responsible for these transformations. SubD may have secondary function in the conversion of the identified subglutinols to subglutinol analog 45, which seems to be the major product of the cluster. In Metarhizium robertsii (strain ARSEF 23 / ATCC MYA-3075) (Metarhizium anisopliae (strain ARSEF 23)), this protein is Terpene cyclase subB.